The primary structure comprises 134 residues: Putative capsid protein (134 aa).

As to quaternary structure, homodimer.

It localises to the virion. Self-assembles to form a helical, filamentous nucleocapsid. The capsid proteins wrap around the DNA and maintain it in an A-form by non-specific desolvation and specific coordination of the DNA phosphate groups by positively charged residues. This certainly protects the viral DNA under conditions such as the extreme desiccation of its host. This Sulfolobus islandicus rod-shaped virus 1 (SIRV-1) protein is Putative capsid protein.